Consider the following 235-residue polypeptide: MOB kinase activator 2 (235 aa).

Residues 1–22 form a disordered region; it reads MDWLMGKSKAKPNGKKPAAEEK. Residues C78, C83, H157, and H162 each coordinate Zn(2+). The interval 213 to 235 is disordered; the sequence is NSGATGDGANSGASGAQNHVKER.

The protein belongs to the MOB1/phocein family. Binds STK38 and STK38L. In terms of processing, phosphorylated.

It localises to the nucleus. The protein resides in the cytoplasm. Its subcellular location is the perinuclear region. Its function is as follows. Stimulates the autophosphorylation and kinase activity of STK38 and STK38L. The protein is MOB kinase activator 2 (Mob2) of Mus musculus (Mouse).